Reading from the N-terminus, the 227-residue chain is UPF0758 protein Dred_2549 (227 aa).

The 123-residue stretch at 105–227 folds into the MPN domain; that stretch reads IIRCPEDVCG…FTSLKSKGLI (123 aa). Zn(2+)-binding residues include H176, H178, and D189. The JAMM motif signature appears at 176–189; it reads HNHPSGDPTPSRED.

Belongs to the UPF0758 family.

The protein is UPF0758 protein Dred_2549 of Desulforamulus reducens (strain ATCC BAA-1160 / DSM 100696 / MI-1) (Desulfotomaculum reducens).